Consider the following 436-residue polypeptide: Trigger factor (436 aa).

Residues Gly163–Pro248 form the PPIase FKBP-type domain.

Belongs to the FKBP-type PPIase family. Tig subfamily.

It is found in the cytoplasm. It carries out the reaction [protein]-peptidylproline (omega=180) = [protein]-peptidylproline (omega=0). Functionally, involved in protein export. Acts as a chaperone by maintaining the newly synthesized protein in an open conformation. Functions as a peptidyl-prolyl cis-trans isomerase. This is Trigger factor from Delftia acidovorans (strain DSM 14801 / SPH-1).